The primary structure comprises 144 residues: UPF0306 protein ESA_03544 (144 aa).

Belongs to the UPF0306 family.

This Cronobacter sakazakii (strain ATCC BAA-894) (Enterobacter sakazakii) protein is UPF0306 protein ESA_03544.